Reading from the N-terminus, the 281-residue chain is Putative thiosulfate sulfurtransferase (281 aa).

2 consecutive Rhodanese domains span residues 18-125 and 154-274; these read NTDG…ELTK and AIGN…VPIE. The active-site Cysteine persulfide intermediate is the cysteine 233. Residue arginine 238 participates in substrate binding.

It catalyses the reaction thiosulfate + hydrogen cyanide = thiocyanate + sulfite + 2 H(+). Functionally, may be a sulfotransferase involved in the formation of thiosulfate. The chain is Putative thiosulfate sulfurtransferase (cysA) from Saccharopolyspora erythraea (Streptomyces erythraeus).